Consider the following 511-residue polypeptide: Fas-activated serine/threonine kinase (511 aa).

The RAP domain maps to 439-497 (VVLMLRERWHFCRDGRVLLGSRALRERHLGLMGYQLLPLPFEELESQRGLPQLKSYLRQ).

This sequence belongs to the FAST protein kinase family. As to quaternary structure, interacts with TIA1; the interactions leads to TIA1 phosphorylation. Interacts with TIAR. In terms of processing, autophosphorylated on serine/threonine residues. Activated by dephosphorylation.

It localises to the mitochondrion matrix. The catalysed reaction is L-seryl-[Fas-activated protein] + ATP = O-phospho-L-seryl-[Fas-activated protein] + ADP + H(+). It catalyses the reaction L-threonyl-[Fas-activated protein] + ATP = O-phospho-L-threonyl-[Fas-activated protein] + ADP + H(+). It carries out the reaction L-seryl-[protein] + ATP = O-phospho-L-seryl-[protein] + ADP + H(+). The enzyme catalyses L-threonyl-[protein] + ATP = O-phospho-L-threonyl-[protein] + ADP + H(+). Its function is as follows. Phosphorylates the splicing regulator TIA1, thereby promoting the inclusion of FAS exon 6, which leads to an mRNA encoding a pro-apoptotic form of the receptor. Required for the biogenesis of some mitochondrial-encoded mRNAs, specifically stabilizes ND6 (NADH dehydrogenase complex subunit 6) mRNA, and regulates its levels. This Mus musculus (Mouse) protein is Fas-activated serine/threonine kinase (Fastk).